Here is a 435-residue protein sequence, read N- to C-terminus: Glutamine synthetase (435 aa).

Residues 12-94 (KSIKYFMISY…VAADCVMDDR (83 aa)) enclose the GS beta-grasp domain. One can recognise a GS catalytic domain in the interval 100 to 435 (PRVVLKRLVA…QWERDSTLDI (336 aa)). Mg(2+)-binding residues include Glu-123, Glu-125, Glu-180, and Glu-187. Gly-232 is an L-glutamate binding site. His-236 lines the Mg(2+) pocket. Ser-240 serves as a coordination point for ATP. Arg-291 and Arg-315 together coordinate L-glutamate. Residues Arg-315 and Arg-320 each contribute to the ATP site. Glu-328 lines the Mg(2+) pocket. Arg-330 provides a ligand contact to L-glutamate.

It belongs to the glutamine synthetase family. In terms of assembly, homooctamer. The cofactor is Mg(2+).

It catalyses the reaction L-glutamate + NH4(+) + ATP = L-glutamine + ADP + phosphate + H(+). In terms of biological role, catalyzes the ATP-dependent biosynthesis of glutamine from glutamate and ammonia. The polypeptide is Glutamine synthetase (Rhizobium leguminosarum bv. phaseoli).